Consider the following 484-residue polypeptide: UDP-N-acetylmuramoyl-L-alanyl-D-glutamate--2,6-diaminopimelate ligase (484 aa).

110–116 (GTNGKTT) provides a ligand contact to ATP. UDP-N-acetyl-alpha-D-muramoyl-L-alanyl-D-glutamate is bound by residues 152-153 (TT), Ser-179, and Arg-187. Lys-219 is modified (N6-carboxylysine). Meso-2,6-diaminopimelate contacts are provided by residues Arg-381, 405-408 (DNPR), Gly-455, and Glu-459. Residues 405-408 (DNPR) carry the Meso-diaminopimelate recognition motif motif.

It belongs to the MurCDEF family. MurE subfamily. Requires Mg(2+) as cofactor. Carboxylation is probably crucial for Mg(2+) binding and, consequently, for the gamma-phosphate positioning of ATP.

It localises to the cytoplasm. The catalysed reaction is UDP-N-acetyl-alpha-D-muramoyl-L-alanyl-D-glutamate + meso-2,6-diaminopimelate + ATP = UDP-N-acetyl-alpha-D-muramoyl-L-alanyl-gamma-D-glutamyl-meso-2,6-diaminopimelate + ADP + phosphate + H(+). Its pathway is cell wall biogenesis; peptidoglycan biosynthesis. Catalyzes the addition of meso-diaminopimelic acid to the nucleotide precursor UDP-N-acetylmuramoyl-L-alanyl-D-glutamate (UMAG) in the biosynthesis of bacterial cell-wall peptidoglycan. The polypeptide is UDP-N-acetylmuramoyl-L-alanyl-D-glutamate--2,6-diaminopimelate ligase (Clostridium perfringens (strain 13 / Type A)).